The primary structure comprises 343 residues: uncharacterized protein (343 aa).

Belongs to the histone deacetylase family.

Putative deacetylase. This is an uncharacterized protein from Methanocaldococcus jannaschii (strain ATCC 43067 / DSM 2661 / JAL-1 / JCM 10045 / NBRC 100440) (Methanococcus jannaschii).